We begin with the raw amino-acid sequence, 438 residues long: Gamma-glutamyl phosphate reductase (438 aa).

The disordered stretch occupies residues 1–21 (MTAQTSSDVTDQKTDLTRESE). The segment covering 10–21 (TDQKTDLTRESE) has biased composition (basic and acidic residues).

The protein belongs to the gamma-glutamyl phosphate reductase family.

The protein resides in the cytoplasm. It catalyses the reaction L-glutamate 5-semialdehyde + phosphate + NADP(+) = L-glutamyl 5-phosphate + NADPH + H(+). Its pathway is amino-acid biosynthesis; L-proline biosynthesis; L-glutamate 5-semialdehyde from L-glutamate: step 2/2. Functionally, catalyzes the NADPH-dependent reduction of L-glutamate 5-phosphate into L-glutamate 5-semialdehyde and phosphate. The product spontaneously undergoes cyclization to form 1-pyrroline-5-carboxylate. In Corynebacterium efficiens (strain DSM 44549 / YS-314 / AJ 12310 / JCM 11189 / NBRC 100395), this protein is Gamma-glutamyl phosphate reductase.